A 177-amino-acid polypeptide reads, in one-letter code: Dual-action ribosomal maturation protein DarP (177 aa).

A disordered region spans residues 1 to 26 (MKIVGDSEHFKQPYDSDEEYVSKTED).

This sequence belongs to the DarP family.

It is found in the cytoplasm. Member of a network of 50S ribosomal subunit biogenesis factors which assembles along the 30S-50S interface, preventing incorrect 23S rRNA structures from forming. Promotes peptidyl transferase center (PTC) maturation. The protein is Dual-action ribosomal maturation protein DarP of Shewanella sp. (strain MR-4).